We begin with the raw amino-acid sequence, 310 residues long: ADP-L-glycero-D-manno-heptose-6-epimerase (310 aa).

Residues 10–11 (FI), 31–32 (DN), lysine 38, lysine 53, 75–79 (EGACS), and asparagine 92 contribute to the NADP(+) site. Tyrosine 140 acts as the Proton acceptor in catalysis. Lysine 144 lines the NADP(+) pocket. Asparagine 169 serves as a coordination point for substrate. Residues valine 170 and lysine 178 each contribute to the NADP(+) site. Lysine 178 (proton acceptor) is an active-site residue. Substrate-binding positions include serine 180, histidine 187, 201-204 (FEGS), arginine 209, and tyrosine 272.

Belongs to the NAD(P)-dependent epimerase/dehydratase family. HldD subfamily. In terms of assembly, homopentamer. NADP(+) serves as cofactor.

It catalyses the reaction ADP-D-glycero-beta-D-manno-heptose = ADP-L-glycero-beta-D-manno-heptose. Its pathway is nucleotide-sugar biosynthesis; ADP-L-glycero-beta-D-manno-heptose biosynthesis; ADP-L-glycero-beta-D-manno-heptose from D-glycero-beta-D-manno-heptose 7-phosphate: step 4/4. Its function is as follows. Catalyzes the interconversion between ADP-D-glycero-beta-D-manno-heptose and ADP-L-glycero-beta-D-manno-heptose via an epimerization at carbon 6 of the heptose. This chain is ADP-L-glycero-D-manno-heptose-6-epimerase, found in Salmonella arizonae (strain ATCC BAA-731 / CDC346-86 / RSK2980).